Reading from the N-terminus, the 443-residue chain is 26S proteasome regulatory subunit 4 homolog A (443 aa).

2 disordered regions span residues 1–55 and 87–108; these read MGQG…LPTV and RLKP…LRGT. 2 stretches are compositionally biased toward basic and acidic residues: residues 12-28 and 87-106; these read QGDR…KKFE and RLKP…DDLR. An ATP-binding site is contributed by 229–236; it reads GEPGTGKT. Residues Lys-296 and Lys-433 each participate in a glycyl lysine isopeptide (Lys-Gly) (interchain with G-Cter in ubiquitin) cross-link.

Belongs to the AAA ATPase family. As to quaternary structure, component of the 19S regulatory particle (RP/PA700) base subcomplex of the 26S proteasome. The 26S proteasome is composed of a core protease (CP), known as the 20S proteasome, capped at one or both ends by the 19S regulatory particle (RP/PA700). The RP/PA700 complex is composed of at least 17 different subunits in two subcomplexes, the base and the lid, which form the portions proximal and distal to the 20S proteolytic core, respectively. Required for innate immunity. Interacts with UNI. As to expression, preferentially expressed in the root and shoot apical meristem.

It is found in the cytoplasm. Its subcellular location is the P-body. The protein resides in the nucleus. In terms of biological role, the 26S protease is involved in the ATP-dependent degradation of ubiquitinated proteins. The regulatory (or ATPase) complex confers ATP dependency and substrate specificity to the 26S complex. Interacts with transit peptides of proteins targeted to the chloroplast, and may be involved in the degradation of unimported plastid protein precursors. Is required for the maintenance of postembryonic root and shoot meristems. Has a specific role in the regulation of organs size. Acts redundantly with RPT2B in the regulation of gametogenesis. With RPT2B plays a critical role in 26S proteasome assembly. Acts as an upstream signaling component for inducing both defense and morphological phenotypes in the constitutive active uni-1D mutant. Acts as a negative regulator of endoreduplication in trichome cells. May function after the completion of the third endoreduplication step (8C to 16C) mediated by RHL1. Acts as a negative regulator of transcriptional gene silencing (TGS) at specific endogenous genes through DNA methylation. Promotes post-transcriptional gene silencing (PTGS) by limiting the degradation of transgene aberrant RNAs by the RNA quality control (RQC) machinery, thus favoring their entry into cytoplasmic siRNA bodies where they can trigger PTGS. Involved in tolerance to zinc deficiency, possibly through alleviation of oxidative stresses or processing of poly-ubiquitinated proteins. Required for resistance to the fungal pathogen Golovinomyces cichoracearum. The chain is 26S proteasome regulatory subunit 4 homolog A from Arabidopsis thaliana (Mouse-ear cress).